The chain runs to 369 residues: Protein RecA (369 aa).

Over residues 1–10 (MARTTDDSKK) the composition is skewed to basic and acidic residues. A disordered region spans residues 1-20 (MARTTDDSKKAAPAAGTADE). 82–89 (GPESSGKT) is a binding site for ATP. The tract at residues 350-369 (PAAAVAAPDEGDDDLGDEEV) is disordered. Residues 358-369 (DEGDDDLGDEEV) show a composition bias toward acidic residues.

It belongs to the RecA family.

It localises to the cytoplasm. In terms of biological role, can catalyze the hydrolysis of ATP in the presence of single-stranded DNA, the ATP-dependent uptake of single-stranded DNA by duplex DNA, and the ATP-dependent hybridization of homologous single-stranded DNAs. It interacts with LexA causing its activation and leading to its autocatalytic cleavage. This chain is Protein RecA, found in Gloeobacter violaceus (strain ATCC 29082 / PCC 7421).